The primary structure comprises 189 residues: MyoD family inhibitor domain-containing protein 2 (189 aa).

An MDFI domain is found at 28–188; that stretch reads KEDTQLTNAK…LAMEISEICY (161 aa).

Belongs to the MDFI family.

The chain is MyoD family inhibitor domain-containing protein 2 from Homo sapiens (Human).